The following is a 419-amino-acid chain: Methionine aminopeptidase 2 (419 aa).

The tract at residues 1–69 (MSTNSSNPNE…KITAIDNSYP (69 aa)) is disordered. Positions 11-29 (VMEKVQDLKIDDSKPKVDS) are enriched in basic and acidic residues. The span at 30 to 41 (EEQPEAESDGES) shows a compositional bias: acidic residues. Positions 48–61 (KKKKKKKSKKKKKI) are enriched in basic residues. His172 contributes to the substrate binding site. A divalent metal cation contacts are provided by Asp192, Asp203, and His272. His280 is a substrate binding site. Positions 305 and 400 each coordinate a divalent metal cation.

Belongs to the peptidase M24A family. Methionine aminopeptidase eukaryotic type 2 subfamily. Co(2+) serves as cofactor. Requires Zn(2+) as cofactor. It depends on Mn(2+) as a cofactor. Fe(2+) is required as a cofactor.

The protein localises to the cytoplasm. The catalysed reaction is Release of N-terminal amino acids, preferentially methionine, from peptides and arylamides.. In terms of biological role, cotranslationally removes the N-terminal methionine from nascent proteins. The N-terminal methionine is often cleaved when the second residue in the primary sequence is small and uncharged (Met-Ala-, Cys, Gly, Pro, Ser, Thr, or Val). The protein is Methionine aminopeptidase 2 of Debaryomyces hansenii (strain ATCC 36239 / CBS 767 / BCRC 21394 / JCM 1990 / NBRC 0083 / IGC 2968) (Yeast).